The primary structure comprises 134 residues: ATP synthase epsilon chain (134 aa).

This sequence belongs to the ATPase epsilon chain family. F-type ATPases have 2 components, CF(1) - the catalytic core - and CF(0) - the membrane proton channel. CF(1) has five subunits: alpha(3), beta(3), gamma(1), delta(1), epsilon(1). CF(0) has three main subunits: a, b and c.

It localises to the cell inner membrane. In terms of biological role, produces ATP from ADP in the presence of a proton gradient across the membrane. This Nitratidesulfovibrio vulgaris (strain ATCC 29579 / DSM 644 / CCUG 34227 / NCIMB 8303 / VKM B-1760 / Hildenborough) (Desulfovibrio vulgaris) protein is ATP synthase epsilon chain.